A 981-amino-acid chain; its full sequence is Echinoderm microtubule-associated protein-like 4 (981 aa).

At Met-1 the chain carries N-acetylmethionine. Disordered regions lie at residues 1–20 (MDGF…TSDV) and 57–205 (DHVA…PKLI). Residues 1-249 (MDGFAGSLDD…IPSDVDNYDD (249 aa)) are microtubule-binding. Residues Ser-7, Ser-13, Ser-16, and Ser-61 each carry the phosphoserine modification. Positions 14–63 (AASTSDVQDRLSALESRVQQQEDEITVLKAALADVLRRLAISEDHVASVK) form a coiled coil. Thr-96 bears the Phosphothreonine mark. Over residues 114 to 134 (GTEKKKEKPQGQREKKEESHS) the composition is skewed to basic and acidic residues. Residue Ser-134 is modified to Phosphoserine; by NEK7. Residues 137–155 (QSPQIRASPSPQPSSQPLQ) show a composition bias toward low complexity. At Ser-144 the chain carries Phosphoserine; by NEK6. Position 146 is a phosphoserine; by NEK7 (Ser-146). Position 171 is a phosphoserine (Ser-171). Basic and acidic residues predominate over residues 176–193 (SPAEKSHNSWENSDDSRN). Ser-200 is subject to Phosphoserine. At Thr-201 the chain carries Phosphothreonine. Phosphotyrosine is present on Tyr-226. Position 237 is a phosphothreonine (Thr-237). 5 WD repeats span residues 259–297 (LKLE…LFNY), 301–348 (TQRH…VWDS), 356–396 (IIGL…VWDW), 403–438 (AEIK…FWTW), and 445–484 (RKQG…IWSK). A Phosphothreonine; by NEK6 modification is found at Thr-490. WD repeat units lie at residues 500 to 538 (QISK…LWDH), 543 to 579 (EREI…LRGT), 582 to 621 (DGFQ…LWNS), 625 to 662 (RLEW…VLDA), 668 to 704 (VSIH…LYVV), 711 to 750 (YSRY…YWDI), 760 to 818 (RSDC…LFQY), and 825 to 864 (APSH…QWKL). A Phosphothreonine; by NEK6 and NEK7 modification is found at Thr-609. Positions 881–893 (LTKAPVSSTESVI) are enriched in polar residues. Positions 881–981 (LTKAPVSSTE…EDQQDPSPSS (101 aa)) are disordered. Residues Ser-891 and Ser-895 each carry the phosphoserine modification. Thr-897 and Thr-899 each carry phosphothreonine. Phosphoserine is present on Ser-903. Polar residues predominate over residues 916–931 (ISSSPTLLENSLEQTV). Residues 937–946 (HSEEESEEGS) are compositionally biased toward acidic residues. Phosphoserine is present on Ser-978. Phosphoserine; by NEK6 and NEK7 is present on Ser-981.

The protein belongs to the WD repeat EMAP family. Homotrimer; self-association is mediated by the N-terminal coiled coil. Interacts (via WD repeats) with NUDC. Interacts with alpha- and beta-tubulin during mitosis. Post-translationally, phosphorylated during mitosis. Phosphorylation at Ser-144 and Ser-146 promotes its dissociation from microtubules during mitosis which is required for efficient chromosome congression.

Its subcellular location is the cytoplasm. It localises to the cytoskeleton. The protein localises to the spindle. The protein resides in the microtubule organizing center. It is found in the midbody. In terms of biological role, essential for the formation and stability of microtubules (MTs). Required for the organization of the mitotic spindle and for the proper attachment of kinetochores to MTs. Promotes the recruitment of NUDC to the mitotic spindle for mitotic progression. The protein is Echinoderm microtubule-associated protein-like 4 (EML4) of Homo sapiens (Human).